The sequence spans 368 residues: Peptide chain release factor 2 (368 aa).

Gln249 carries the N5-methylglutamine modification.

The protein belongs to the prokaryotic/mitochondrial release factor family. In terms of processing, methylated by PrmC. Methylation increases the termination efficiency of RF2.

The protein localises to the cytoplasm. Peptide chain release factor 2 directs the termination of translation in response to the peptide chain termination codons UGA and UAA. This is Peptide chain release factor 2 from Rhodococcus jostii (strain RHA1).